A 290-amino-acid polypeptide reads, in one-letter code: Putative tyrosine recombinase TTE1313 (290 aa).

The region spanning 1 to 85 is the Core-binding (CB) domain; the sequence is MAESVVGEFL…SIKAFYHYLF (85 aa). The Tyr recombinase domain maps to 106-290; the sequence is KEPVTLTVEQ…EVYNKFHPRA (185 aa). Residue R239 is part of the active site. Residue Y283 is the O-(3'-phospho-DNA)-tyrosine intermediate of the active site.

Belongs to the 'phage' integrase family.

The protein localises to the cytoplasm. Its function is as follows. Site-specific tyrosine recombinase, which acts by catalyzing the cutting and rejoining of the recombining DNA molecules. This Caldanaerobacter subterraneus subsp. tengcongensis (strain DSM 15242 / JCM 11007 / NBRC 100824 / MB4) (Thermoanaerobacter tengcongensis) protein is Putative tyrosine recombinase TTE1313.